Reading from the N-terminus, the 147-residue chain is Cytochrome c-type biogenesis protein CcmE (147 aa).

The Cytoplasmic portion of the chain corresponds to 1 to 7 (MTVRQRR). A helical; Signal-anchor for type II membrane protein transmembrane segment spans residues 8 to 28 (FAMVILVVIGVSIATGLGLKA). The Periplasmic segment spans residues 29–147 (FQENILFFYN…KTKANTEDKL (119 aa)). Heme-binding residues include His-123 and Tyr-127.

The protein belongs to the CcmE/CycJ family.

The protein localises to the cell inner membrane. Functionally, heme chaperone required for the biogenesis of c-type cytochromes. Transiently binds heme delivered by CcmC and transfers the heme to apo-cytochromes in a process facilitated by CcmF and CcmH. In Nitrosococcus oceani (strain ATCC 19707 / BCRC 17464 / JCM 30415 / NCIMB 11848 / C-107), this protein is Cytochrome c-type biogenesis protein CcmE.